Consider the following 295-residue polypeptide: MDNKLNIVIITGMSGAGKTVAIQSFEDMGYFTVDNIPPNLIEKFVGLLNTPDNKIDKVALVVDMRSRAFFEDIQSIVTELTDNTSVNFKLLFLDANDTELVSRYKETRRSHPLAIDGRTLDGITKEREILADLKNLSEVVIDTSELTPRNLRARILQKFATSTESTFRIEVMSFGFKYGLPLDADLVFDVRFLPNPHYISELRDKNGTDQEVYDYVMEHPQSEEFYQNLMKMLVPILPAYKKEGKSVLTIAFGCTGGQHRSVAFAERVSAALREKWHLNVSHRDKDRRKETVNRS.

12–19 (GMSGAGKT) contacts ATP. 63–66 (DMRS) is a binding site for GTP.

It belongs to the RapZ-like family.

Displays ATPase and GTPase activities. The protein is Nucleotide-binding protein llmg_1557 of Lactococcus lactis subsp. cremoris (strain MG1363).